The following is a 433-amino-acid chain: GTPase Der (433 aa).

2 consecutive EngA-type G domains span residues 3–167 and 174–349; these read NIVA…QDTI and PKIA…TNKT. Residues 9 to 16, 56 to 60, 119 to 122, 180 to 187, 227 to 231, and 292 to 295 contribute to the GTP site; these read GRPNVGKS, DTGGY, NKAD, DTAGI, and NKWD. The KH-like domain maps to 350–433; it reads QKISTAALNQ…VPVQLVFRKK (84 aa).

The protein belongs to the TRAFAC class TrmE-Era-EngA-EngB-Septin-like GTPase superfamily. EngA (Der) GTPase family. In terms of assembly, associates with the 50S ribosomal subunit.

Its function is as follows. GTPase that plays an essential role in the late steps of ribosome biogenesis. The chain is GTPase Der from Amoebophilus asiaticus (strain 5a2).